A 123-amino-acid polypeptide reads, in one-letter code: Large ribosomal subunit protein bL12 (123 aa).

The protein belongs to the bacterial ribosomal protein bL12 family. As to quaternary structure, homodimer. Part of the ribosomal stalk of the 50S ribosomal subunit. Forms a multimeric L10(L12)X complex, where L10 forms an elongated spine to which 2 to 4 L12 dimers bind in a sequential fashion. Binds GTP-bound translation factors.

In terms of biological role, forms part of the ribosomal stalk which helps the ribosome interact with GTP-bound translation factors. Is thus essential for accurate translation. This Rhodopseudomonas palustris (strain HaA2) protein is Large ribosomal subunit protein bL12.